Here is a 96-residue protein sequence, read N- to C-terminus: Protein Vpr (96 aa).

The tract at residues 1 to 42 (MEQAPEDQGPQREPHNEWTLELLEELKNEAVRHFPRIWLHGL) is homooligomerization. Phosphoserine; by host occurs at positions 79, 94, and 96.

It belongs to the HIV-1 VPR protein family. As to quaternary structure, homooligomer, may form homodimer. Interacts with p6-gag region of the Pr55 Gag precursor protein through a (Leu-X-X)4 motif near the C-terminus of the P6gag protein. Interacts with host UNG. May interact with host RAD23A/HHR23A. Interacts with host VPRBP/DCAF1, leading to hijack the CUL4A-RBX1-DDB1-DCAF1/VPRBP complex, mediating ubiquitination of host proteins such as TERT and ZGPAT and arrest of the cell cycle in G2 phase. Phosphorylated on several residues by host. These phosphorylations regulate VPR activity for the nuclear import of the HIV-1 pre-integration complex.

The protein localises to the virion. It localises to the host nucleus. The protein resides in the host extracellular space. During virus entry, plays a role in the transport of the viral pre-integration (PIC) complex to the host nucleus. This function is crucial for viral infection of non-dividing macrophages. May act directly at the nuclear pore complex, by binding nucleoporins phenylalanine-glycine (FG)-repeat regions. Its function is as follows. During virus replication, may deplete host UNG protein, and incude G2-M cell cycle arrest. Acts by targeting specific host proteins for degradation by the 26S proteasome, through association with the cellular CUL4A-DDB1 E3 ligase complex by direct interaction with host VPRPB/DCAF-1. Cell cycle arrest reportedly occurs within hours of infection and is not blocked by antiviral agents, suggesting that it is initiated by the VPR carried into the virion. Additionally, VPR induces apoptosis in a cell cycle dependent manner suggesting that these two effects are mechanistically linked. Detected in the serum and cerebrospinal fluid of AIDS patient, VPR may also induce cell death to bystander cells. This Homo sapiens (Human) protein is Protein Vpr.